Consider the following 589-residue polypeptide: Peroxisomal biogenesis factor 8 (589 aa).

The Microbody targeting signal motif lies at 587–589; it reads SKL.

It is found in the peroxisome matrix. Functionally, required for peroxisome assembly. The sequence is that of Peroxisomal biogenesis factor 8 (PEX8) from Saccharomyces cerevisiae (strain ATCC 204508 / S288c) (Baker's yeast).